The following is a 180-amino-acid chain: Cytokinin-beta-glucosidase (180 aa).

In terms of tissue distribution, accumulates in young leaves and shoot tips.

Functionally, hydrolyzes cytokinin glucosides thus liberating free cytokinins. The polypeptide is Cytokinin-beta-glucosidase (TROLC) (Nicotiana tabacum (Common tobacco)).